The following is a 179-amino-acid chain: Peptidyl-prolyl cis-trans isomerase H (179 aa).

A PPIase cyclophilin-type domain is found at 16–178 (FFDISIGDTP…LQVRIAECGE (163 aa)).

It belongs to the cyclophilin-type PPIase family. PPIase H subfamily.

It localises to the nucleus. The catalysed reaction is [protein]-peptidylproline (omega=180) = [protein]-peptidylproline (omega=0). In terms of biological role, PPIases accelerate the folding of proteins. It catalyzes the cis-trans isomerization of proline imidic peptide bonds in oligopeptides. The polypeptide is Peptidyl-prolyl cis-trans isomerase H (CYP3) (Cryptococcus neoformans var. neoformans serotype D (strain B-3501A) (Filobasidiella neoformans)).